The following is a 382-amino-acid chain: 1-deoxy-D-xylulose 5-phosphate reductoisomerase (382 aa).

6 residues coordinate NADPH: threonine 10, glycine 11, serine 12, isoleucine 13, glycine 36, and asparagine 122. Lysine 123 is a 1-deoxy-D-xylulose 5-phosphate binding site. Glutamate 124 is an NADPH binding site. Aspartate 148 is a binding site for Mn(2+). Residues serine 149, glutamate 150, serine 174, and histidine 197 each coordinate 1-deoxy-D-xylulose 5-phosphate. Glutamate 150 serves as a coordination point for Mn(2+). Residue glycine 203 coordinates NADPH. Serine 210, asparagine 215, lysine 216, and glutamate 219 together coordinate 1-deoxy-D-xylulose 5-phosphate. Position 219 (glutamate 219) interacts with Mn(2+).

Belongs to the DXR family. It depends on Mg(2+) as a cofactor. Mn(2+) is required as a cofactor.

The catalysed reaction is 2-C-methyl-D-erythritol 4-phosphate + NADP(+) = 1-deoxy-D-xylulose 5-phosphate + NADPH + H(+). The protein operates within isoprenoid biosynthesis; isopentenyl diphosphate biosynthesis via DXP pathway; isopentenyl diphosphate from 1-deoxy-D-xylulose 5-phosphate: step 1/6. Functionally, catalyzes the NADPH-dependent rearrangement and reduction of 1-deoxy-D-xylulose-5-phosphate (DXP) to 2-C-methyl-D-erythritol 4-phosphate (MEP). This is 1-deoxy-D-xylulose 5-phosphate reductoisomerase from Chlorobium limicola (strain DSM 245 / NBRC 103803 / 6330).